Here is a 213-residue protein sequence, read N- to C-terminus: Ribosomal RNA small subunit methyltransferase G (213 aa).

Residues Gly-75, Phe-80, 128-129 (IE), and Arg-144 contribute to the S-adenosyl-L-methionine site.

This sequence belongs to the methyltransferase superfamily. RNA methyltransferase RsmG family.

It localises to the cytoplasm. It carries out the reaction guanosine(527) in 16S rRNA + S-adenosyl-L-methionine = N(7)-methylguanosine(527) in 16S rRNA + S-adenosyl-L-homocysteine. Functionally, specifically methylates the N7 position of guanine in position 527 of 16S rRNA. The sequence is that of Ribosomal RNA small subunit methyltransferase G from Brucella anthropi (strain ATCC 49188 / DSM 6882 / CCUG 24695 / JCM 21032 / LMG 3331 / NBRC 15819 / NCTC 12168 / Alc 37) (Ochrobactrum anthropi).